The following is a 98-amino-acid chain: uncharacterized protein (98 aa).

Low complexity predominate over residues 1–21; sequence MTTSPTTISTTTAATTTTTTP. A disordered region spans residues 1–26; sequence MTTSPTTISTTTAATTTTTTPGKGTD. A helical transmembrane segment spans residues 29–49; that stretch reads MVYIEAMLFSMLVLILLIIVC.

The protein resides in the host membrane. This is an uncharacterized protein from Equine herpesvirus 2 (strain 86/87) (EHV-2).